The chain runs to 318 residues: Transcriptional regulator NovG (318 aa).

Residues 146-156 (VASLRSSSTAG) are compositionally biased toward polar residues. The disordered stretch occupies residues 146 to 176 (VASLRSSSTAGTVGRRTGQDGRSRPNDGTDG). Positions 162–176 (TGQDGRSRPNDGTDG) are enriched in basic and acidic residues.

It belongs to the ParB family.

Its function is as follows. Transcription regulator that specifically activates expression of genes involved in the novobiocin biosynthesis pathway. Binds 5'-GTTCRACTG(N)(11)CRGTYGAAC-3' DNA sequence. This chain is Transcriptional regulator NovG (novG), found in Streptomyces niveus (Streptomyces spheroides).